The primary structure comprises 510 residues: Lysine--tRNA ligase (510 aa).

E420 and E427 together coordinate Mg(2+).

The protein belongs to the class-II aminoacyl-tRNA synthetase family. Homodimer. The cofactor is Mg(2+).

The protein localises to the cytoplasm. The enzyme catalyses tRNA(Lys) + L-lysine + ATP = L-lysyl-tRNA(Lys) + AMP + diphosphate. This chain is Lysine--tRNA ligase, found in Ralstonia nicotianae (strain ATCC BAA-1114 / GMI1000) (Ralstonia solanacearum).